Consider the following 276-residue polypeptide: Probable ribose-5-phosphate isomerase 3, chloroplastic (276 aa).

A chloroplast-targeting transit peptide spans 1-39 (MASLSFVSSSHLTLRTPSIALRSTGSSPRTSVSFSVKAQ). N-acetylserine is present on serine 40. Phosphoserine is present on serine 108.

The protein belongs to the ribose 5-phosphate isomerase family. Phosphorylated by SRK2C.

It is found in the plastid. Its subcellular location is the chloroplast. It catalyses the reaction aldehydo-D-ribose 5-phosphate = D-ribulose 5-phosphate. It participates in carbohydrate degradation; pentose phosphate pathway; D-ribose 5-phosphate from D-ribulose 5-phosphate (non-oxidative stage): step 1/1. In terms of biological role, catalyzes the reversible conversion of ribose-5-phosphate to ribulose 5-phosphate. The polypeptide is Probable ribose-5-phosphate isomerase 3, chloroplastic (RPI3) (Arabidopsis thaliana (Mouse-ear cress)).